The following is a 325-amino-acid chain: G-protein coupled receptor E6 (325 aa).

Transmembrane regions (helical) follow at residues 45-65 (LFGT…MGFF), 71-91 (FTPS…LWLM), 106-126 (IVTE…NVGM), 145-165 (PAAI…VIAV), 198-218 (LVAK…GTAL), 233-253 (AICV…LTAM), and 274-294 (VFIY…MFTG).

The protein belongs to the G-protein coupled receptor 1 family.

Its subcellular location is the host membrane. The chain is G-protein coupled receptor E6 (E6) from Equus caballus (Horse).